The primary structure comprises 582 residues: Max-binding protein MNT (582 aa).

At Ser2 the chain carries N-acetylserine. The interval 18 to 224 is disordered; it reads QQQQRAREEQ…RPGGIGTREV (207 aa). Residues 22-42 are compositionally biased toward basic and acidic residues; the sequence is RAREEQERLRLEQEREQEQKK. Composition is skewed to pro residues over residues 61 to 82 and 99 to 108; these read EAPPLPLSPPAPPPAPPPPLAT and QPLPPPPPLP. Low complexity predominate over residues 109–123; that stretch reads AAAQPLPLAPRQPAL. Pro residues-rich tracts occupy residues 135–149 and 160–171; these read APLPSRPQVPTPAPL and NGSPKPLQPLPT. Over residues 203-214 the composition is skewed to basic and acidic residues; that stretch reads PAEEVKSSEQKK. Residues 220 to 271 form the bHLH domain; it reads GTREVHNKLEKNRRAHLKECFETLKRNIPNVDDKKTSNLSVLRTALRYIQSL. The segment at 271-299 is leucine-zipper; sequence LKRKEKEYEHEMERLAREKIATQQRLAEL. The segment at 319 to 422 is disordered; that stretch reads TGQPEDDQAS…PPPPAAPAQT (104 aa). Positions 334-345 are enriched in acidic residues; that stretch reads EGEDNIDEDMEE. The span at 368 to 381 shows a compositional bias: pro residues; sequence LPPPSTTPAPLPPH. A compositionally biased stretch (low complexity) spans 387–408; sequence HSVALPPAHLPVQQQQPQQKTP. A compositionally biased stretch (pro residues) spans 409 to 418; the sequence is LPAPPPPPAA.

In terms of assembly, efficient DNA binding requires dimerization with another bHLH protein. Binds DNA as a homodimer or a heterodimer with MAX.

The protein localises to the nucleus. Its function is as follows. Binds DNA as a heterodimer with MAX and represses transcription. Binds to the canonical E box sequence 5'-CACGTG-3' and, with higher affinity, to 5'-CACGCG-3'. This chain is Max-binding protein MNT (MNT), found in Homo sapiens (Human).